The following is a 440-amino-acid chain: Phosphoglucosamine mutase (440 aa).

Catalysis depends on Ser97, which acts as the Phosphoserine intermediate. Mg(2+) is bound by residues Ser97, Asp237, Asp239, and Asp241. Ser97 is modified (phosphoserine).

Belongs to the phosphohexose mutase family. It depends on Mg(2+) as a cofactor. Post-translationally, activated by phosphorylation.

The enzyme catalyses alpha-D-glucosamine 1-phosphate = D-glucosamine 6-phosphate. Its function is as follows. Catalyzes the conversion of glucosamine-6-phosphate to glucosamine-1-phosphate. The protein is Phosphoglucosamine mutase of Nautilia profundicola (strain ATCC BAA-1463 / DSM 18972 / AmH).